We begin with the raw amino-acid sequence, 203 residues long: DNA-directed RNA polymerase III subunit rpc8 (203 aa).

The protein belongs to the eukaryotic RPB7/RPC8 RNA polymerase subunit family. Component of the RNA polymerase III (Pol III) complex consisting of 17 subunits. Rpc25/rpc8 and rpc17/rpc9 form a Pol III subcomplex.

The protein resides in the cytoplasm. It is found in the nucleus. In terms of biological role, DNA-dependent RNA polymerase catalyzes the transcription of DNA into RNA using the four ribonucleoside triphosphates as substrates. Specific peripheric component of RNA polymerase III which synthesizes small RNAs, such as 5S rRNA and tRNA. The sequence is that of DNA-directed RNA polymerase III subunit rpc8 (rpc25) from Schizosaccharomyces pombe (strain 972 / ATCC 24843) (Fission yeast).